The primary structure comprises 571 residues: Chondroitin sulfate proteoglycan 5 (571 aa).

An N-terminal signal peptide occupies residues 1-30; it reads MGRAGGGGPGWGPPPVLLLLGVTLVLTAGA. Over 31–428 the chain is Extracellular; it reads VPAREAGSAI…SIITDFQVMC (398 aa). Residue serine 38 is glycosylated (O-linked (Xyl...) (chondroitin sulfate) serine). Asparagine 57 carries an N-linked (GlcNAc...) asparagine glycan. The interval 57–91 is disordered; sequence NDTREEAGLPAAGEDETSWTERGSELAAVGPGVGP. O-linked (GalNAc...) threonine glycosylation is present at threonine 76. Serine 123 carries O-linked (Xyl...) (chondroitin sulfate) serine glycosylation. A glycan (O-linked (GalNAc...) threonine) is linked at threonine 132. 3 disordered regions span residues 137–169, 186–254, and 279–357; these read DEAL…KPSL, GGST…TPSW, and DDLE…DLAT. An O-linked (GalNAc...) serine glycan is attached at serine 143. Threonine 144 and threonine 153 each carry an O-linked (GalNAc...) threonine glycan. Residues serine 156 and serine 160 are each glycosylated (O-linked (GalNAc...) serine). Threonine 162 and threonine 198 each carry an O-linked (GalNAc...) threonine glycan. Acidic residues predominate over residues 214 to 223; that stretch reads IDIDYFEGLD. A glycan (O-linked (GalNAc...) threonine) is linked at threonine 240. The segment at 270-306 is interaction with TNC and TNR; it reads DFYPTTSFYDDLEEEEEEEEDKDAVGGGDLEDESDLL. Positions 279-291 are enriched in acidic residues; it reads DDLEEEEEEEEDK. Threonine 318 and threonine 322 each carry an O-linked (GalNAc...) threonine glycan. The N-linked (GlcNAc...) asparagine glycan is linked to asparagine 372. The EGF-like domain occupies 376 to 418; sequence RSVCDLFPSYCHNGGQCYLVENIGAFCRCNTQDYIWHKGMRCE. Intrachain disulfides connect cysteine 379-cysteine 392, cysteine 386-cysteine 402, and cysteine 404-cysteine 417. A helical membrane pass occupies residues 429–449; sequence VAVGSAALVLLLLFMMTVFFA. An interaction with GOPC region spans residues 447 to 465; the sequence is FFAKKLYLLKTENTKLRRT. Topologically, residues 450–571 are cytoplasmic; sequence KKLYLLKTEN…EVNCLQNNLT (122 aa). Phosphoserine occurs at positions 472, 480, 488, and 548. Positions 538 to 563 are disordered; sequence EESFNIQNSMSPKLEGGKGDQDDLEV.

In terms of assembly, interacts with ERBB3 and GOPC. Binds TNR and probably TNC. Interacts with MDK; this interaction is independent of the presence of chondroitin sulfate chains and promotes elongation of oligodendroglial precursor-like cells. Post-translationally, N-glycosylated. In terms of processing, O-glycosylated; contains chondroitin sulfate glycans. Part-time proteoglycan, expressed in part as a proteoglycan exhibiting chondroitin sulfate glycans and in part as a non-proteoglycan form. The relative amount of both forms depends on tissues and tissue maturation. Phosphorylated; in intracellular and extracellular parts. As to expression, expressed in cerebral cortex and cerebellum. Expressed in retina (at protein level).

The protein localises to the cell membrane. Its subcellular location is the synaptic cell membrane. It is found in the endoplasmic reticulum membrane. It localises to the golgi apparatus membrane. The protein resides in the cell surface. The protein localises to the secreted. In terms of biological role, may function as a growth and differentiation factor involved in neuritogenesis. May induce ERBB3 activation. The protein is Chondroitin sulfate proteoglycan 5 (Cspg5) of Rattus norvegicus (Rat).